A 141-amino-acid chain; its full sequence is Large ribosomal subunit protein uL11 (141 aa).

This sequence belongs to the universal ribosomal protein uL11 family. In terms of assembly, part of the ribosomal stalk of the 50S ribosomal subunit. Interacts with L10 and the large rRNA to form the base of the stalk. L10 forms an elongated spine to which L12 dimers bind in a sequential fashion forming a multimeric L10(L12)X complex. In terms of processing, one or more lysine residues are methylated.

In terms of biological role, forms part of the ribosomal stalk which helps the ribosome interact with GTP-bound translation factors. The polypeptide is Large ribosomal subunit protein uL11 (Helicobacter acinonychis (strain Sheeba)).